Reading from the N-terminus, the 319-residue chain is Probable cell division protein WhiA (319 aa).

Residues 277–310 (SLEELGKLAEPAMTKDAIAGRIRRLLCLADKRAK) constitute a DNA-binding region (H-T-H motif).

Belongs to the WhiA family.

Involved in cell division and chromosome segregation. The chain is Probable cell division protein WhiA from Tropheryma whipplei (strain Twist) (Whipple's bacillus).